Here is a 256-residue protein sequence, read N- to C-terminus: Tumor necrosis factor receptor superfamily member 9 (256 aa).

The first 23 residues, 1-23 (MGNNCYNVVVIVLLLVGCEKVGA), serve as a signal peptide directing secretion. TNFR-Cys repeat units lie at residues 24–45 (VQNS…PVCK), 46–85 (SCPP…NAEC), 86–117 (ECIE…QGCK), and 118–159 (TCSL…VVCG). The Extracellular segment spans residues 24–187 (VQNSCDNCQP…GPGGHSLQVL (164 aa)). 9 disulfide bridges follow: Cys28/Cys37, Cys31/Cys44, Cys47/Cys61, Cys64/Cys77, Cys67/Cys85, Cys87/Cys93, Cys98/Cys105, Cys101/Cys116, and Cys119/Cys133. N-linked (GlcNAc...) asparagine glycosylation is found at Asn128 and Asn138. A disulfide bridge connects residues Cys139 and Cys158. A helical membrane pass occupies residues 188-208 (TLFLALTSALLLALIFITLLF). Residues 209–256 (SVLKWIRKKFPHIFKQPFKKTTGAAQEEDACSCRCPQEEEGGGGGYEL) are Cytoplasmic-facing.

As to quaternary structure, predominantly homodimeric, but may also exist as a monomer. Associates with p56-LCK. Interacts with TRAF1, TRAF2 and TRAF3. Expressed in activated thymocytes, splenic T cells, CD4(+), and CD8(+) T-cells.

It is found in the cell membrane. Receptor for TNFSF9/4-1BBL. Conveys a signal that enhances CD8(+) T-cell survival, cytotoxicity, and mitochondrial activity, thereby promoting immunity against viruses and tumors. In Mus musculus (Mouse), this protein is Tumor necrosis factor receptor superfamily member 9 (Tnfrsf9).